A 151-amino-acid chain; its full sequence is Large ribosomal subunit protein uL15 (151 aa).

The tract at residues 1–60 (MAENSPLKAHNLRPAPGAKTAKTRVGRGEASKGKTAGRGTKGTKARYQVPERFEGGQMPL) is disordered.

The protein belongs to the universal ribosomal protein uL15 family. Part of the 50S ribosomal subunit.

Binds to the 23S rRNA. This chain is Large ribosomal subunit protein uL15, found in Streptomyces griseus subsp. griseus (strain JCM 4626 / CBS 651.72 / NBRC 13350 / KCC S-0626 / ISP 5235).